The sequence spans 525 residues: GMP synthase [glutamine-hydrolyzing] (525 aa).

The Glutamine amidotransferase type-1 domain maps to 8 to 207; sequence KILILDFGSQ…ALDICGCAAN (200 aa). Catalysis depends on C85, which acts as the Nucleophile. Residues H181 and E183 contribute to the active site. Residues 208–400 form the GMPS ATP-PPase domain; that stretch reads WKPSSIIEDA…LGLPYNMLYR (193 aa). 235–241 is a binding site for ATP; the sequence is SGGVDSS.

As to quaternary structure, homodimer.

It catalyses the reaction XMP + L-glutamine + ATP + H2O = GMP + L-glutamate + AMP + diphosphate + 2 H(+). Its pathway is purine metabolism; GMP biosynthesis; GMP from XMP (L-Gln route): step 1/1. Its function is as follows. Catalyzes the synthesis of GMP from XMP. This chain is GMP synthase [glutamine-hydrolyzing], found in Shewanella oneidensis (strain ATCC 700550 / JCM 31522 / CIP 106686 / LMG 19005 / NCIMB 14063 / MR-1).